Here is a 201-residue protein sequence, read N- to C-terminus: MARYTGPKSRIARKFGEGIFGADKVLSKKNYPPGQHGNSRKRKTSEYGIQLREKQKAKYTYGVLEKQFRNLFEKAATAKGITGEVLLQMLEGRLDNIVFRLGIAPTRAAARQLVGHKHITVDGQVVNIPSYAVKPGQLIGVRERSKSLEVIANSLAGFNHSKYAWLEWDEASKVGKLLHIPERADIPENIKEHLIVELYSK.

Positions 28–47 (KKNYPPGQHGNSRKRKTSEY) are disordered. The 64-residue stretch at 92–155 (GRLDNIVFRL…KSLEVIANSL (64 aa)) folds into the S4 RNA-binding domain.

Belongs to the universal ribosomal protein uS4 family. As to quaternary structure, part of the 30S ribosomal subunit. Contacts protein S5. The interaction surface between S4 and S5 is involved in control of translational fidelity.

Functionally, one of the primary rRNA binding proteins, it binds directly to 16S rRNA where it nucleates assembly of the body of the 30S subunit. With S5 and S12 plays an important role in translational accuracy. This Bacteroides fragilis (strain YCH46) protein is Small ribosomal subunit protein uS4.